The following is a 552-amino-acid chain: Protein FAM234A (552 aa).

Residues 1 to 48 (MTDGKDLEAEIHPLKSENRKVPENAGALAGKEPRGTPAPQTRLSHCRT) lie on the Cytoplasmic side of the membrane. The chain crosses the membrane as a helical; Signal-anchor for type II membrane protein span at residues 49 to 69 (AAFFLSLFACLLVVFVVSFII). Topologically, residues 70 to 552 (PCPDRPALQG…LSRLRYRSEA (483 aa)) are extracellular. N-linked (GlcNAc...) asparagine glycans are attached at residues asparagine 115, asparagine 238, and asparagine 473.

Belongs to the FAM234 family.

It localises to the membrane. The chain is Protein FAM234A (FAM234A) from Bos taurus (Bovine).